The sequence spans 1136 residues: MFSPRGTPGSGRRQAPRTGGRRSVSAVQPGLLFSPRRSAVTARSTPTRVQSHAVVESYNFDVQTFGSSLPVKVMEALTMADVDDQISVKVEASGWAWMVCGERLIVWKVSQTSVAKLSVCKDLQLPSSEFAYSADLVSISSSGPLDLAPIQSISVLAVSPDGLVRFWPSLAHEGSYTEISLDLSGHLSNYVAAVKGGSFIVSSYRGHLLRLSADSSGKLHHRPVQQGQGMLSGIGRRVSSLFGIRGQPADLSVFSVLWVKASSCLYSLSSCGLSKWEVDENSETQVLSWSTNQIITDSITDAIWDSESNYSEIKKGVNVLYLDMQPSNAGLVVLAAAWYPGDTPCVAYFCLVTLAESIVPSPDLLTVEVTKYNPPFQSEEELLKTRLVLPDPSSPAAYLYNEELVFACSTGAGRGGLAEEKILFSSPGDRVRGGGVCADLPVFFSQNSGLVAVLARETASLLPETMEDSLCTSVAGPGPEGTPLETPPKIDMVAQEDKTKLLKQAFLQFCRHDLVGAQSMVDELFPSDGEGSADLDTVVTQIDLDLVDDYPACDPRWAESVPDEGAGFTLTSLILLHQLEDKMKAHRCLMDFLLQTGLLDRLTSTKVRSCPMATRLLLCEHAEKLSAAIVLKNHHAKHPELVNTAIQTALKKNSTDTPTNLTPADVFFREVSQISSIFECLLDEEEKALKEHPDAARWGEVVLSVNDIIKDMLQAAAQYRETKASLYRAPENCSPEPEYIPWTASGGVGGVRSVISRQHELILRAAYPHADAELRSVLCEQLVALLDSLLSGYVAQLTSLRRGGQQERYDTLENEYTQKRSELLKPLLELGQHQWVAALAEKYCDFDILVQLCERTDNQSRLQQYMVKFADQNFADFLFRWYMEKGKRGKLLSQPMATHQQLASFLQAHDHLSWLHDIHVQDYQRAHRTLYNQANMETRYFSKKKTLLALSKLTALASDMPEPVHRRQLNDIVEQERFLLHQETLPKQLLEEKQLNPDSMPLLSPQNLISLYICDENRGANEYDFKKALDLLEYFEEENGIDVDALKREIFSKALKKDWKESWSSSDDNDDPLEAARDSTFVKILQKLIQERVSLQTYLPDIKDLLQEDELESLKSKPYFEFLLRANYEHYLKVQI.

The interval 1-26 (MFSPRGTPGSGRRQAPRTGGRRSVSA) is disordered.

This sequence belongs to the nucleoporin Nup133 family. Forms part of the Nup160 subcomplex in the nuclear pore which is composed of NUP160, NUP133, NUP107 and Nup96. This complex plays a role in RNA export and in tethering Nup98 and NUP153 to the nucleus. In terms of tissue distribution, widely expressed in the embryo and in adult tissues. Higher expression is observed in the brain, testes, ovary, skin, and kidney.

It localises to the nucleus. The protein resides in the nuclear pore complex. The protein localises to the chromosome. Its subcellular location is the centromere. It is found in the kinetochore. Involved in poly(A)+ RNA transport. Involved in nephrogenesis. This Danio rerio (Zebrafish) protein is Nuclear pore complex protein Nup133.